Here is a 261-residue protein sequence, read N- to C-terminus: Expansin-B2 (261 aa).

A signal peptide spans 1–24; it reads MAGASAKVVAMLLSVLATYGFAAG. In terms of domain architecture, Expansin-like EG45 spans 51–157; that stretch reads GGACGFKNTN…RRVPCYHRGL (107 aa). Disulfide bonds link Cys-54–Cys-82, Cys-85–Cys-152, and Cys-90–Cys-96. Residues 170–256 form the Expansin-like CBD domain; it reads VYLAVLVEFA…NWRANTNYGS (87 aa).

It belongs to the expansin family. Expansin B subfamily. In terms of tissue distribution, expressed in roots.

It localises to the secreted. The protein localises to the cell wall. Its subcellular location is the membrane. In terms of biological role, may cause loosening and extension of plant cell walls by disrupting non-covalent bonding between cellulose microfibrils and matrix glucans. No enzymatic activity has been found. May be required for rapid internodal elongation in deepwater rice during submergence. This chain is Expansin-B2 (EXPB2), found in Oryza sativa subsp. japonica (Rice).